The sequence spans 188 residues: Killer cell lectin-like receptor subfamily G member 1 (188 aa).

Residues 1–33 are Cytoplasmic-facing; that stretch reads MADSSIYSTLELPEAPQVQDESRWKLKAVLHRP. An ITIM motif motif is present at residues 5–10; that stretch reads SIYSTL. The chain crosses the membrane as a helical; Signal-anchor for type II membrane protein span at residues 34 to 56; it reads HLSRFAMVALGLLTVILMSLLMY. Over 57–188 the chain is Extracellular; it reads QRILCCGSKD…LQWICKKVLY (132 aa). An intrachain disulfide couples cysteine 75 to cysteine 86. Residues asparagine 82 and asparagine 97 are each glycosylated (N-linked (GlcNAc...) asparagine). Residues 82–184 form the C-type lectin domain; that stretch reads NGSHCYYFSM…CEVALQWICK (103 aa). 2 disulfides stabilise this stretch: cysteine 103–cysteine 183 and cysteine 162–cysteine 175.

In terms of assembly, forms a monomer and homodimer; disulfide-linked. Interacts (via ITIM motif) with PTPN11 and INPP5D. In terms of processing, phosphorylated in response to monoclonal antibody G63 binding and antigenic stimulation. As to expression, expressed specifically on natural killer (NK) cells and activated CD8 T-cells. Not detected in spleen, thymus, lymph node, testis, brain or kidney. Not detected on mast cell lines, bone marrow-derived mast cells, or peritoneal mast cells.

It is found in the cell membrane. Its function is as follows. Plays an inhibitory role on natural killer (NK) cells and T-cell functions upon binding to their non-MHC ligands. May mediate missing self recognition by binding to a highly conserved site on classical cadherins, enabling it to monitor expression of E-cadherin/CDH1, N-cadherin/CDH2 and R-cadherin/CDH4 on target cells. The sequence is that of Killer cell lectin-like receptor subfamily G member 1 (Klrg1) from Mus musculus (Mouse).